The following is a 110-amino-acid chain: UPF0102 protein HH_1751 (110 aa).

This sequence belongs to the UPF0102 family.

In Helicobacter hepaticus (strain ATCC 51449 / 3B1), this protein is UPF0102 protein HH_1751.